We begin with the raw amino-acid sequence, 219 residues long: Transcriptional activator protein rep2 (219 aa).

Residues 177–197 fold into a zinc finger; the sequence is CSKCNTTFNHSTALMMHEATC.

Its function is as follows. Transcriptional activator which interacts with the mcb binding subunit complex formed by res2 and cdc10. Rep2 is required for the mitotic cell cycle start. The polypeptide is Transcriptional activator protein rep2 (rep2) (Schizosaccharomyces pombe (strain 972 / ATCC 24843) (Fission yeast)).